Reading from the N-terminus, the 33-residue chain is Dermaseptin-H6 (33 aa).

Leu33 carries the post-translational modification Leucine amide.

In terms of tissue distribution, expressed by the skin glands.

It localises to the secreted. Has antimicrobial activity. This Pithecopus hypochondrialis (Orange-legged leaf frog) protein is Dermaseptin-H6.